Here is a 63-residue protein sequence, read N- to C-terminus: Large ribosomal subunit protein bL28 (63 aa).

This sequence belongs to the bacterial ribosomal protein bL28 family.

This Syntrophotalea carbinolica (strain DSM 2380 / NBRC 103641 / GraBd1) (Pelobacter carbinolicus) protein is Large ribosomal subunit protein bL28.